Here is a 1232-residue protein sequence, read N- to C-terminus: Dynactin subunit 1 (1232 aa).

The region spanning 31-73 (GATLFATGKWVGVILDDSKGKNDGTVQGRRYFTCEENHGIFVR) is the CAP-Gly domain. Disordered regions lie at residues 82–183 (DGAD…AQVK) and 339–358 (SASEKQEHIKVQKQMEKKNT). Positions 86 to 95 (TTSPETPEPT) are enriched in low complexity. Positions 108–117 (PKSSKLPTRP) are enriched in polar residues. Positions 118–130 (SSSAASSGTASAS) are enriched in low complexity. A compositionally biased stretch (polar residues) spans 133 to 144 (EISSSEPSTPAQ). Over residues 146–163 (PLAAPIIPSPSSAITSPV) the composition is skewed to low complexity. Coiled-coil stretches lie at residues 170-505 (GPSK…KEQQ), 908-1005 (ETVI…RTIE), 1046-1071 (LLLQQIDALRLSMKHLKHENNKLKAH), and 1136-1166 (AAQLLEQTARLKSLSDTIDKLKNEVMKETVS). Over residues 172–183 (SKEEENLRAQVK) the composition is skewed to basic and acidic residues.

The protein belongs to the dynactin 150 kDa subunit family. Monomer and homodimer. Subunit of dynactin, a multiprotein complex part of a tripartite complex with dynein and a adapter, such as BICDL1, BICD2 or HOOK3. The dynactin complex is built around ACTR1A/ACTB filament and consists of an actin-related filament composed of a shoulder domain, a pointed end and a barbed end. Its length is defined by its flexible shoulder domain. The soulder is composed of 2 DCTN1 subunits, 4 DCTN2 and 2 DCTN3. DCTN1/p150(glued) binds directly to microtubules and to cytoplasmic dynein.

It localises to the cytoplasm. The protein resides in the cytoskeleton. The protein localises to the microtubule organizing center. Its subcellular location is the centrosome. It is found in the centriole. It localises to the spindle. The protein resides in the cell cortex. Functionally, part of the dynactin complex that activates the molecular motor dynein for ultra-processive transport along microtubules. Plays a key role in dynein-mediated retrograde transport of vesicles and organelles along microtubules by recruiting and tethering dynein to microtubules. Binds to both dynein and microtubules providing a link between specific cargos, microtubules and dynein. Essential for targeting dynein to microtubule plus ends, recruiting dynein to membranous cargos and enhancing dynein processivity (the ability to move along a microtubule for a long distance without falling off the track). Can also act as a brake to slow the dynein motor during motility along the microtubule. Can regulate microtubule stability by promoting microtubule formation, nucleation and polymerization and by inhibiting microtubule catastrophe in neurons. Inhibits microtubule catastrophe by binding both to microtubules and to tubulin, leading to enhanced microtubule stability along the axon. Plays a role in metaphase spindle orientation. Plays a role in centriole cohesion and subdistal appendage organization and function. Its recruitment to the centriole in a KIF3A-dependent manner is essential for the maintenance of centriole cohesion and the formation of subdistal appendage. Also required for microtubule anchoring at the mother centriole. Plays a role in primary cilia formation. The protein is Dynactin subunit 1 (dctn1) of Xenopus laevis (African clawed frog).